The primary structure comprises 488 residues: Glutamyl-tRNA(Gln) amidotransferase subunit A (488 aa).

Active-site charge relay system residues include K77 and S152. The active-site Acyl-ester intermediate is S176.

Belongs to the amidase family. GatA subfamily. As to quaternary structure, heterotrimer of A, B and C subunits.

It catalyses the reaction L-glutamyl-tRNA(Gln) + L-glutamine + ATP + H2O = L-glutaminyl-tRNA(Gln) + L-glutamate + ADP + phosphate + H(+). Allows the formation of correctly charged Gln-tRNA(Gln) through the transamidation of misacylated Glu-tRNA(Gln) in organisms which lack glutaminyl-tRNA synthetase. The reaction takes place in the presence of glutamine and ATP through an activated gamma-phospho-Glu-tRNA(Gln). In Streptococcus pyogenes serotype M2 (strain MGAS10270), this protein is Glutamyl-tRNA(Gln) amidotransferase subunit A.